A 326-amino-acid polypeptide reads, in one-letter code: Nucleotide sugar transporter SLC35D2 (326 aa).

Residues 1–15 (MEEPNAAPLPSRLAR) lie on the Extracellular side of the membrane. Residues 16–36 (LLSALFYGTCSFLIVLVNKAL) traverse the membrane as a helical segment. The Cytoplasmic segment spans residues 37–41 (LTTYG). A helical transmembrane segment spans residues 42–62 (FPSPIVLGIGQMATTIMILYV). At 63-130 (FKLNKIIHFP…LLEAIILGTQ (68 aa)) the chain is on the extracellular side. A helical membrane pass occupies residues 131–151 (YSLNIILSVLAIVLGAFIAAG). The Cytoplasmic segment spans residues 152 to 155 (SDLT). The helical transmembrane segment at 156–176 (FNLEGYVFVFLNDIFTAANGV) threads the bilayer. Over 177 to 189 (YTKQKMDPKELGK) the chain is Extracellular. Residues 190 to 210 (YGVLFYNACFMLIPTVIISVS) form a helical membrane-spanning segment. Residues 211 to 225 (TGDFQQATEFRHWKN) lie on the Cytoplasmic side of the membrane. A helical transmembrane segment spans residues 226–246 (VLFIIQFLLSCLLGFLLMYST). Topologically, residues 247–253 (ALCSYYN) are extracellular. The helical transmembrane segment at 254-276 (SALTTAVVGAIKNVSVAYIGMLV) threads the bilayer. The Cytoplasmic portion of the chain corresponds to 277–280 (GGDY). Residues 281-303 (IFSLLNFIGLNICMAGGLRYSFL) form a helical membrane-spanning segment. The Extracellular segment spans residues 304-326 (TLSSQLKPKQPVDEESIPLDLKS).

This sequence belongs to the TPT transporter family. SLC35D subfamily.

The protein localises to the golgi apparatus membrane. The enzyme catalyses UMP(out) + UDP-N-acetyl-alpha-D-glucosamine(in) = UMP(in) + UDP-N-acetyl-alpha-D-glucosamine(out). It catalyses the reaction UMP(out) + UDP-alpha-D-glucose(in) = UMP(in) + UDP-alpha-D-glucose(out). Its function is as follows. Nucleotide sugar antiporter transporting UDP-N-acetylglucosamine (UDP-GlcNAc) and UDP-glucose (UDP-Glc) from the cytosol into the lumen of the Golgi in exchange of UMP. By supplying UDP-N-acetylglucosamine, a donor substrate to heparan sulfate synthases, probably takes part in the synthesis of these glycoconjugates. The chain is Nucleotide sugar transporter SLC35D2 from Mus musculus (Mouse).